Consider the following 346-residue polypeptide: ATP-dependent 6-phosphofructokinase (346 aa).

ATP contacts are provided by residues Gly13, 76–77 (RL), and 106–109 (GEGT). A Mg(2+)-binding site is contributed by Glu107. Substrate contacts are provided by residues 129-131 (TID), Arg166, 173-175 (MGR), Glu226, Arg270, and 276-279 (HIQR). Asp131 (proton acceptor) is an active-site residue.

The protein belongs to the phosphofructokinase type A (PFKA) family. Mixed-substrate PFK group III subfamily. Homodimer or homotetramer. It depends on Mg(2+) as a cofactor.

The protein localises to the cytoplasm. The catalysed reaction is beta-D-fructose 6-phosphate + ATP = beta-D-fructose 1,6-bisphosphate + ADP + H(+). It functions in the pathway carbohydrate degradation; glycolysis; D-glyceraldehyde 3-phosphate and glycerone phosphate from D-glucose: step 3/4. In terms of biological role, catalyzes the phosphorylation of D-fructose 6-phosphate to fructose 1,6-bisphosphate by ATP, the first committing step of glycolysis. The polypeptide is ATP-dependent 6-phosphofructokinase (Corynebacterium efficiens (strain DSM 44549 / YS-314 / AJ 12310 / JCM 11189 / NBRC 100395)).